We begin with the raw amino-acid sequence, 264 residues long: Probable glycerol uptake facilitator protein (264 aa).

Transmembrane regions (helical) follow at residues 13-33 (WIGA…GAGS) and 51-71 (TAAF…NSLF). An NPA 1 motif is present at residues 78 to 80 (NPA). The next 3 helical transmembrane spans lie at 104 to 124 (IPLL…GAML), 162 to 182 (FATE…AGSF), and 195 to 215 (VPML…GTAI). Positions 216–218 (NPA) match the NPA 2 motif. A helical transmembrane segment spans residues 244-264 (IPVAAPLSASVILGVLVAVIV).

The protein belongs to the MIP/aquaporin (TC 1.A.8) family.

The protein resides in the cell membrane. It catalyses the reaction glycerol(in) = glycerol(out). In terms of biological role, mediates glycerol diffusion across the cytoplasmic membrane via a pore-type mechanism. In Mycoplasma pneumoniae (strain ATCC 29342 / M129 / Subtype 1) (Mycoplasmoides pneumoniae), this protein is Probable glycerol uptake facilitator protein (glpF).